The following is a 505-amino-acid chain: Ent-kaurene oxidase 2 (505 aa).

The chain crosses the membrane as a helical span at residues 3 to 23; sequence AFVPGGAGAAAAAVGGFVAAA. A heme-binding site is contributed by cysteine 449.

Belongs to the cytochrome P450 family. The cofactor is heme. As to expression, widely expressed.

It is found in the membrane. It catalyses the reaction ent-kaur-16-ene + 3 reduced [NADPH--hemoprotein reductase] + 3 O2 = ent-kaur-16-en-19-oate + 3 oxidized [NADPH--hemoprotein reductase] + 4 H2O + 4 H(+). It participates in plant hormone biosynthesis; gibberellin biosynthesis. Functionally, catalyzes three successive oxidations of the 4-methyl group of ent-kaurene giving kaurenoic acid, a key step in gibberellins (GAs) biosynthesis. GAs, which are involved many processes, including stem elongation, play a central role in plant development. This chain is Ent-kaurene oxidase 2, found in Oryza sativa subsp. japonica (Rice).